Here is a 106-residue protein sequence, read N- to C-terminus: Large ribosomal subunit protein uL24 (106 aa).

The protein belongs to the universal ribosomal protein uL24 family. Part of the 50S ribosomal subunit.

Its function is as follows. One of two assembly initiator proteins, it binds directly to the 5'-end of the 23S rRNA, where it nucleates assembly of the 50S subunit. In terms of biological role, one of the proteins that surrounds the polypeptide exit tunnel on the outside of the subunit. The chain is Large ribosomal subunit protein uL24 from Orientia tsutsugamushi (strain Boryong) (Rickettsia tsutsugamushi).